A 451-amino-acid polypeptide reads, in one-letter code: POU domain, class 3, transcription factor 1 (451 aa).

5 disordered regions span residues 1-21, 69-114, 127-154, 186-253, and 395-451; these read MATT…GTGP, AHPQ…GFHA, AWAQ…HQPQ, GLHH…PSSD, and KRMT…GSVQ. 3 stretches are compositionally biased toward gly residues: residues 11–20, 76–85, and 95–112; these read GPGGGAGGTG, TGGGGGGDWA, and AGGG…GGGF. A compositionally biased stretch (basic and acidic residues) spans 190 to 199; it reads ALHEDGHEAQ. Positions 220-232 are enriched in low complexity; the sequence is AGGLHAAAAHLHP. Residues 247-321 form the POU-specific domain; it reads EDAPSSDDLE…LLNKWLEETD (75 aa). The segment at residues 339–398 is a DNA-binding region (homeobox); sequence KRKKRTSIEVGVKGALESHFLKCPKPSAHEITGLADSLQLEKEVVRVWFCNRRQKEKRMT. The segment covering 427-436 has biased composition (pro residues); the sequence is PSAPPPPPPA.

This sequence belongs to the POU transcription factor family. Class-3 subfamily. In terms of tissue distribution, expressed in embryonal stem cells and in the developing brain.

It localises to the nucleus. Its function is as follows. Transcription factor that binds to the octamer motif (5'-ATTTGCAT-3'). Acts as a transcriptional activator when binding cooperatively with SOX4, SOX11, or SOX12 to gene promoters. Acts as a transcriptional repressor of myelin-specific genes. This chain is POU domain, class 3, transcription factor 1 (POU3F1), found in Homo sapiens (Human).